The chain runs to 81 residues: Photosystem I iron-sulfur center (81 aa).

4Fe-4S ferredoxin-type domains are found at residues 2–31 (AHSV…MVPW) and 39–68 (IASA…VRVY). Positions 11, 14, 17, 21, 48, 51, 54, and 58 each coordinate [4Fe-4S] cluster.

The eukaryotic PSI reaction center is composed of at least 11 subunits. It depends on [4Fe-4S] cluster as a cofactor.

It localises to the plastid. The protein localises to the chloroplast thylakoid membrane. The catalysed reaction is reduced [plastocyanin] + hnu + oxidized [2Fe-2S]-[ferredoxin] = oxidized [plastocyanin] + reduced [2Fe-2S]-[ferredoxin]. In terms of biological role, apoprotein for the two 4Fe-4S centers FA and FB of photosystem I (PSI); essential for photochemical activity. FB is the terminal electron acceptor of PSI, donating electrons to ferredoxin. The C-terminus interacts with PsaA/B/D and helps assemble the protein into the PSI complex. Required for binding of PsaD and PsaE to PSI. PSI is a plastocyanin-ferredoxin oxidoreductase, converting photonic excitation into a charge separation, which transfers an electron from the donor P700 chlorophyll pair to the spectroscopically characterized acceptors A0, A1, FX, FA and FB in turn. In Gnetum gnemon (Spanish joint-fir), this protein is Photosystem I iron-sulfur center.